The primary structure comprises 184 residues: ATP synthase subunit b, chloroplastic (184 aa).

A helical membrane pass occupies residues 27–49 (LATNPINLSVVLGVLIFFGKGVL).

This sequence belongs to the ATPase B chain family. F-type ATPases have 2 components, F(1) - the catalytic core - and F(0) - the membrane proton channel. F(1) has five subunits: alpha(3), beta(3), gamma(1), delta(1), epsilon(1). F(0) has four main subunits: a(1), b(1), b'(1) and c(10-14). The alpha and beta chains form an alternating ring which encloses part of the gamma chain. F(1) is attached to F(0) by a central stalk formed by the gamma and epsilon chains, while a peripheral stalk is formed by the delta, b and b' chains.

It localises to the plastid. Its subcellular location is the chloroplast thylakoid membrane. Functionally, f(1)F(0) ATP synthase produces ATP from ADP in the presence of a proton or sodium gradient. F-type ATPases consist of two structural domains, F(1) containing the extramembraneous catalytic core and F(0) containing the membrane proton channel, linked together by a central stalk and a peripheral stalk. During catalysis, ATP synthesis in the catalytic domain of F(1) is coupled via a rotary mechanism of the central stalk subunits to proton translocation. Component of the F(0) channel, it forms part of the peripheral stalk, linking F(1) to F(0). This Lepidium virginicum (Virginia pepperweed) protein is ATP synthase subunit b, chloroplastic.